A 314-amino-acid polypeptide reads, in one-letter code: Probable cell division protein WhiA (314 aa).

The segment at residues 274 to 308 (SLKELGEMVSTGPISKSGMNHRLRKLNELADKIRN) is a DNA-binding region (H-T-H motif).

It belongs to the WhiA family.

In terms of biological role, involved in cell division and chromosome segregation. The polypeptide is Probable cell division protein WhiA (Staphylococcus epidermidis (strain ATCC 35984 / DSM 28319 / BCRC 17069 / CCUG 31568 / BM 3577 / RP62A)).